Here is a 166-residue protein sequence, read N- to C-terminus: Large ribosomal subunit protein mL41 (166 aa).

Residues 1 to 26 constitute a mitochondrion transit peptide; that stretch reads MQNCIKLVPLALKCPQRAISTSAVLD.

This sequence belongs to the mitochondrion-specific ribosomal protein mL41 family. Component of the mitochondrial ribosome large subunit (39S) which comprises a 16S rRNA and about 50 distinct proteins.

It localises to the mitochondrion. The sequence is that of Large ribosomal subunit protein mL41 (mRpL41) from Drosophila pseudoobscura pseudoobscura (Fruit fly).